We begin with the raw amino-acid sequence, 151 residues long: Decarboxylase nsrE (151 aa).

The 96-residue stretch at 31 to 126 (AGMTEEDYHN…VGDHENFADT (96 aa)) folds into the EthD domain.

It belongs to the tpcK family.

The catalysed reaction is atrochrysone carboxylate + H(+) = atrochrysone + CO2. The protein operates within secondary metabolite biosynthesis. Functionally, decarboxylase; part of the gene cluster that mediates the biosynthesis of the tetrahydroxanthone dimer neosartorin, which exhibits antibacterial activity. The two different monomeric units appear to be synthesized by the same set of enzymes, among which the Baeyer-Villiger monooxygenase nsrF is the key enzyme for the divergence of the biosynthetic routes. The pathway begins with the synthesis of atrochrysone thioester by the polyketide synthase nsrB. The atrochrysone carboxyl ACP thioesterase nsrC then breaks the thioester bond and releases the atrochrysone carboxylic acid from AacuL. Atrochrysone carboxylic acid is decarboxylated by the decarboxylase nsrE, and oxidized by the anthrone oxygenase nsrD to yield emodin. Emodin is then reduced to emodin hydroquinone by the oxidoreductase nsrR. A-ring reduction by the short chain dehydrogenase nsrJ, dehydration by the scytalone dehydratase-like protein nsrI and probable spontaneous re-oxidation, results in overall deoxygenation to chrysophanol. The Baeyer-Villiger monooxygenase nsrF accepts chrysophanol as a substrate to insert one oxygen atom at two different positions to yield the precursors of both monomric units. NsrF is promiscuous/flexible in interacting with the 2 (non methylated and methylated) aromatic rings of chrysophanol, thus diverging the biosynthetic pathway at this point. After the hydrolysis of the lactones, methylesterification by the methyltransferase nsrG yields respectively moniliphenone and 2,2',6'-trihydroxy-4-methyl-6-methoxya-cyldiphenylmethanone. The next steps are the hydroxylation by the FAD-dependent monooxygenase nsrK, followed by isomerization by the monooxygenase nsrQ. The short chain dehydrogenase/reductase nsrO then catalyzes the C-5 ketoreduction to give the xanthone skeleton of blennolide C and 5-acetylblennolide A. The acetyltransferase nsrL has a strict substrate specificity and uses only blennolide A but not blennolide C to yield 5-acetylblennolide A as the single-acetylated product. In the final step of the biosynthesis, the heterodimerization of the 2 xanthones, blennolide C and 5-acetylblennolide A, is catalyzed by the cytochrome P450 monooxygenase nsrP. NsrP can utilize at least three different xanthones as its substrates to perform the dimerization reaction. This chain is Decarboxylase nsrE, found in Aspergillus novofumigatus (strain IBT 16806).